The primary structure comprises 956 residues: Thrombospondin-3 (956 aa).

The signal sequence occupies residues 1 to 21; the sequence is MEKPELWGVLALLLLCSYTCG. The Laminin G-like domain maps to 22-193; the sequence is SQDLQVIDLL…VESMKIILGG (172 aa). Cystine bridges form between cysteine 278/cysteine 289, cysteine 283/cysteine 300, cysteine 303/cysteine 314, cysteine 320/cysteine 332, cysteine 326/cysteine 341, cysteine 344/cysteine 368, cysteine 374/cysteine 388, cysteine 382/cysteine 397, cysteine 400/cysteine 412, cysteine 418/cysteine 432, cysteine 426/cysteine 442, cysteine 444/cysteine 455, cysteine 471/cysteine 478, cysteine 483/cysteine 503, cysteine 519/cysteine 539, cysteine 542/cysteine 562, cysteine 578/cysteine 598, cysteine 601/cysteine 621, cysteine 639/cysteine 659, cysteine 679/cysteine 699, and cysteine 715/cysteine 936. A glycan (N-linked (GlcNAc...) asparagine) is linked at asparagine 310. Positions 316–354 constitute an EGF-like 1; calcium-binding domain; sequence DINECAHADPCFPGSSCINTMPGFHCEACPPGYKGTRVS. An EGF-like 2; calcium-binding domain is found at 370 to 410; sequence DIDECNDGNNGGCDPNSICTNTVGSFKCGPCRLGFLGNQSQ. Asparagine 407 carries N-linked (GlcNAc...) asparagine glycosylation. One can recognise an EGF-like 3 domain in the interval 414–456; sequence PARTCHSPAHSPCHIHAHCLFERNGAVSCQCNVGWAGNGNVCG. TSP type-3 repeat units follow at residues 457–491, 492–527, 528–550, 551–586, 587–609, 610–647, 648–687, and 688–723; these read PDTD…NSGQ, EDAD…NKDQ, QNSD…NNDQ, KDTD…NPLQ, TDRD…NPTQ, TDAD…NSSQ, LDSD…NPNQ, and KDSD…EVTL. 2 disordered regions span residues 518–537 and 546–699; these read NCRL…SFGD and PNND…GDVC. Residues 555–568 show a composition bias toward acidic residues; sequence GNGEGDACDNDVDG. Positions 612-628 are enriched in acidic residues; it reads ADSDLVGDVCDTNEDSD. Asparagine 644 carries N-linked (GlcNAc...) asparagine glycosylation. Acidic residues predominate over residues 650-667; sequence SDNDGLGDECDGDDDNDG. Residues 727-941 form the TSP C-terminal domain; sequence RAYQTVILDP…LQYRCNDTVP (215 aa). Asparagine 937 carries N-linked (GlcNAc...) asparagine glycosylation.

Belongs to the thrombospondin family. In terms of assembly, oligomer; disulfide-linked. As to expression, brain, lung and cartilage.

Its function is as follows. Adhesive glycoprotein that mediates cell-to-cell and cell-to-matrix interactions. Can bind to fibrinogen, fibronectin, laminin and type V collagen. The protein is Thrombospondin-3 (Thbs3) of Mus musculus (Mouse).